A 224-amino-acid polypeptide reads, in one-letter code: Pyridoxal 5'-phosphate synthase subunit PdxT (224 aa).

55 to 57 (GES) is a binding site for L-glutamine. Residue cysteine 87 is the Nucleophile of the active site. Residues arginine 113 and 142-143 (IR) each bind L-glutamine. Catalysis depends on charge relay system residues histidine 178 and glutamate 180.

It belongs to the glutaminase PdxT/SNO family. In the presence of PdxS, forms a dodecamer of heterodimers. Only shows activity in the heterodimer.

The enzyme catalyses aldehydo-D-ribose 5-phosphate + D-glyceraldehyde 3-phosphate + L-glutamine = pyridoxal 5'-phosphate + L-glutamate + phosphate + 3 H2O + H(+). It carries out the reaction L-glutamine + H2O = L-glutamate + NH4(+). It participates in cofactor biosynthesis; pyridoxal 5'-phosphate biosynthesis. Catalyzes the hydrolysis of glutamine to glutamate and ammonia as part of the biosynthesis of pyridoxal 5'-phosphate. The resulting ammonia molecule is channeled to the active site of PdxS. The polypeptide is Pyridoxal 5'-phosphate synthase subunit PdxT (Syntrophus aciditrophicus (strain SB)).